The sequence spans 512 residues: Maturase K (512 aa).

The protein belongs to the intron maturase 2 family. MatK subfamily.

The protein localises to the plastid. Its subcellular location is the chloroplast. Functionally, usually encoded in the trnK tRNA gene intron. Probably assists in splicing its own and other chloroplast group II introns. The sequence is that of Maturase K from Platanus occidentalis (Sycamore).